The sequence spans 547 residues: Glucose-6-phosphate isomerase 1 (547 aa).

Glutamate 353 serves as the catalytic Proton donor. Catalysis depends on residues histidine 384 and lysine 512.

The protein belongs to the GPI family.

The protein resides in the cytoplasm. It catalyses the reaction alpha-D-glucose 6-phosphate = beta-D-fructose 6-phosphate. It functions in the pathway carbohydrate biosynthesis; gluconeogenesis. Its pathway is carbohydrate degradation; glycolysis; D-glyceraldehyde 3-phosphate and glycerone phosphate from D-glucose: step 2/4. Catalyzes the reversible isomerization of glucose-6-phosphate to fructose-6-phosphate. This Chromobacterium violaceum (strain ATCC 12472 / DSM 30191 / JCM 1249 / CCUG 213 / NBRC 12614 / NCIMB 9131 / NCTC 9757 / MK) protein is Glucose-6-phosphate isomerase 1.